The sequence spans 214 residues: Glycoprotein Q2 (214 aa).

The N-terminal stretch at 1–19 is a signal peptide; sequence MHFLVVYILIHFHAYRGMA. Asparagine 41, asparagine 74, asparagine 110, and asparagine 210 each carry an N-linked (GlcNAc...) asparagine; by host glycan.

In terms of assembly, interacts with isoform gQ1. The heterodimer gQ1-gQ2 associates with the glycoprotein complex gH-gL to form a tetrameric complex. The gH/gL/gQ1/gQ2 complex binds to human receptor CD46. Post-translationally, glycosylated by host.

The protein resides in the virion membrane. Its subcellular location is the host endoplasmic reticulum-Golgi intermediate compartment. In terms of biological role, plays a role in virus entry by participating in host receptor binding at the cell surface. This chain is Glycoprotein Q2, found in Human herpesvirus 6A (strain Uganda-1102) (HHV-6 variant A).